An 83-amino-acid chain; its full sequence is Short neurotoxin 1 (83 aa).

The N-terminal stretch at 1–21 (MKTLLLTLVVVTIVCLDLGYT) is a signal peptide. 4 cysteine pairs are disulfide-bonded: C24–C45, C38–C62, C64–C75, and C76–C81.

The protein belongs to the three-finger toxin family. Short-chain subfamily. Type I alpha-neurotoxin sub-subfamily. In terms of tissue distribution, expressed by the venom gland.

Its subcellular location is the secreted. Its function is as follows. Binds to muscle nicotinic acetylcholine receptor (nAChR) and inhibit acetylcholine from binding to the receptor, thereby impairing neuromuscular transmission. This chain is Short neurotoxin 1, found in Oxyuranus scutellatus scutellatus (Australian taipan).